A 189-amino-acid polypeptide reads, in one-letter code: Glutathione-dependent formaldehyde-activating enzyme (189 aa).

A CENP-V/GFA domain is found at 20–167; the sequence is FAGGTLVCKC…LKELGLEPYD (148 aa). The Zn(2+) site is built by cysteine 27, cysteine 29, cysteine 48, cysteine 50, cysteine 53, cysteine 95, and cysteine 98.

Belongs to the Gfa family. Requires Zn(2+) as cofactor.

The catalysed reaction is S-(hydroxymethyl)glutathione = glutathione + formaldehyde. Its pathway is one-carbon metabolism; formaldehyde degradation; formate from formaldehyde (glutathione route): step 1/3. Functionally, catalyzes the condensation of formaldehyde and glutathione to S-hydroxymethylglutathione. The chain is Glutathione-dependent formaldehyde-activating enzyme from Rhodopseudomonas palustris (strain BisB18).